A 166-amino-acid polypeptide reads, in one-letter code: Zinc finger CCHC domain-containing protein 13 (166 aa).

Residues 4-21 (KDFFACGHSGHWARGCPR) form a CCHC-type 1; degenerate zinc finger. Residues 45 to 62 (YTCYCCGESGRNAKNCVL) form a CCHC-type 2; degenerate zinc finger. 4 CCHC-type zinc fingers span residues 65 to 82 (NICY…DCKD), 89 to 106 (QHCY…DCDR), 110 to 127 (QKCY…DCAQ), and 128 to 145 (VKCY…NCSK).

This chain is Zinc finger CCHC domain-containing protein 13 (ZCCHC13), found in Homo sapiens (Human).